The following is a 437-amino-acid chain: 3-ketoacyl-CoA thiolase (437 aa).

Cysteine 99 (acyl-thioester intermediate) is an active-site residue. Residues histidine 392 and cysteine 422 each act as proton acceptor in the active site.

This sequence belongs to the thiolase-like superfamily. Thiolase family. In terms of assembly, heterotetramer of two alpha chains (FadJ) and two beta chains (FadI).

The protein resides in the cytoplasm. The catalysed reaction is an acyl-CoA + acetyl-CoA = a 3-oxoacyl-CoA + CoA. Its pathway is lipid metabolism; fatty acid beta-oxidation. Its function is as follows. Catalyzes the final step of fatty acid oxidation in which acetyl-CoA is released and the CoA ester of a fatty acid two carbons shorter is formed. This is 3-ketoacyl-CoA thiolase from Pectobacterium atrosepticum (strain SCRI 1043 / ATCC BAA-672) (Erwinia carotovora subsp. atroseptica).